We begin with the raw amino-acid sequence, 151 residues long: UPF0756 membrane protein GWCH70_2680 (151 aa).

4 helical membrane passes run 5–25, 53–73, 86–106, and 116–136; these read ILFL…SLMI, WGVT…EIGF, WIAL…VTLL, and LVFG…GPLI.

This sequence belongs to the UPF0756 family.

The protein localises to the cell membrane. The polypeptide is UPF0756 membrane protein GWCH70_2680 (Geobacillus sp. (strain WCH70)).